A 205-amino-acid polypeptide reads, in one-letter code: Inactive ribonuclease-like protein 9 (205 aa).

Residues 1–26 form the signal peptide; sequence MMRTLITIHPLPLLLLLQQLLQPVQF. 3 cysteine pairs are disulfide-bonded: C98–C153, C116–C168, and C123–C130. N-linked (GlcNAc...) asparagine glycans are attached at residues N131 and N143.

It belongs to the pancreatic ribonuclease family.

It localises to the secreted. Functionally, does not exhibit any ribonuclease activity. In Gorilla gorilla gorilla (Western lowland gorilla), this protein is Inactive ribonuclease-like protein 9 (RNASE9).